The primary structure comprises 82 residues: Putative antitoxin RelB1 (82 aa).

Antitoxin component of a type II toxin-antitoxin (TA) system. Its cognate toxin is RelE1 (Potential). This Methanocaldococcus jannaschii (strain ATCC 43067 / DSM 2661 / JAL-1 / JCM 10045 / NBRC 100440) (Methanococcus jannaschii) protein is Putative antitoxin RelB1 (relB1).